The following is a 103-amino-acid chain: Large ribosomal subunit protein uL24 (103 aa).

Belongs to the universal ribosomal protein uL24 family. As to quaternary structure, part of the 50S ribosomal subunit.

One of two assembly initiator proteins, it binds directly to the 5'-end of the 23S rRNA, where it nucleates assembly of the 50S subunit. Its function is as follows. One of the proteins that surrounds the polypeptide exit tunnel on the outside of the subunit. The protein is Large ribosomal subunit protein uL24 of Listeria innocua serovar 6a (strain ATCC BAA-680 / CLIP 11262).